An 89-amino-acid chain; its full sequence is U1-hexatoxin-Iw1e (89 aa).

The signal sequence occupies residues 1-18; the sequence is MLKFVVLIFVVIMASTFA. Cystine bridges form between C21-C32, C26-C40, C31-C66, C50-C74, and C68-C81. The propeptide occupies 87–89; the sequence is RSE.

The protein belongs to the MIT-like AcTx family. Expressed by the venom gland.

The protein localises to the secreted. The protein is U1-hexatoxin-Iw1e of Illawarra wisharti (Illawarra funnel-web spider).